The chain runs to 90 residues: Acylphosphatase (90 aa).

The region spanning 3 to 90 (QRQFTVYGCV…RVFSDFTIER (88 aa)) is the Acylphosphatase-like domain. Residues Arg18 and Asn36 contribute to the active site.

It belongs to the acylphosphatase family.

It carries out the reaction an acyl phosphate + H2O = a carboxylate + phosphate + H(+). The sequence is that of Acylphosphatase (acyP) from Actinobacillus succinogenes (strain ATCC 55618 / DSM 22257 / CCUG 43843 / 130Z).